Reading from the N-terminus, the 1201-residue chain is Kinesin-like protein costa (1201 aa).

One can recognise a Kinesin motor domain in the interval 4–391 (PIQVAVRIFP…LQFAFKVQCV (388 aa)). The tract at residues 23-92 (SFGPTEPKKD…NGNDSGQKDY (70 aa)) is disordered. Positions 28–56 (EPKKDAQAVDEGADSKDSEAQVPAAEKDN) are enriched in basic and acidic residues. Positions 57-75 (PSISETDPNGNAEQDSAAD) are enriched in polar residues. 175-182 (GQRGQGKS) is a binding site for ATP. 3 disordered regions span residues 502 to 536 (AEEP…PDLD), 565 to 606 (HPKA…GASL), and 618 to 639 (ASQQ…ESSS). Over residues 510–521 (SEAANSESPNSD) the composition is skewed to low complexity. Phosphoserine is present on residues S599 and S605. Coiled coils occupy residues 652 to 821 (AATA…ELVK) and 968 to 1001 (TKVI…ERVL).

Belongs to the TRAFAC class myosin-kinesin ATPase superfamily. Kinesin family. KIF27 subfamily. In terms of assembly, homodimer (Potential). Binds microtubules. Interacts with ci, smo, sgg, CkIalpha and protein kinase A catalytic subunit. Interacts (via kinesin motor domain) with Ubr3. Polyubiquitinated by Ubr3, which leads to proteasomal degradation.

The protein resides in the cytoplasm. It localises to the cytoskeleton. Regulates cubitus interruptus (ci) processing by recruiting multiple kinases to promote its efficient phosphorylation. Scaffolds multiple kinases and ci into proximity to promote its hyperphosphorylation, which then targets it for SCFSlimb/proteasome-mediated processing to generate its repressor form. Hh signaling inhibits ci phosphorylation by interfering with the cos-ci-kinases complex formation. Negatively regulates hh-signaling pathways during various processes, including photoreceptor differentiation. May negatively regulate a hh-signaling pathway which functions in the intestinal immune response to bacterial uracil by activating the Duox-dependent production of reactive oxygen species (ROS). In Drosophila melanogaster (Fruit fly), this protein is Kinesin-like protein costa (cos).